Consider the following 30-residue polypeptide: U10-ctenitoxin-Co1b (30 aa).

Intrachain disulfides connect C2-C17 and C9-C22.

In terms of tissue distribution, expressed by the venom gland.

The protein localises to the secreted. Antagonist of L-type calcium channels (Cav1/CACNA1). The chain is U10-ctenitoxin-Co1b from Ctenus ornatus (Brazilian spider).